The chain runs to 371 residues: Beta-1,3-galactosyltransferase 4 (371 aa).

Residues 1 to 4 (MPLS) are Cytoplasmic-facing. Residues 5–25 (LFRRVLLAVLLLVIIWTLFGP) form a helical; Signal-anchor for type II membrane protein membrane-spanning segment. Topologically, residues 26–371 (SGLGEELLSL…RCRFIAWFSS (346 aa)) are lumenal. Asn-143 carries an N-linked (GlcNAc...) asparagine glycan.

This sequence belongs to the glycosyltransferase 31 family. Expressed in heart, brain, spleen, kidney, lung and testis.

It localises to the golgi apparatus membrane. It carries out the reaction a ganglioside GM2 (d18:1(4E)) + UDP-alpha-D-galactose = a ganglioside GM1 (d18:1(4E)) + UDP + H(+). It catalyses the reaction a ganglioside GM2 + UDP-alpha-D-galactose = a ganglioside GM1 + UDP + H(+). The catalysed reaction is a ganglioside GD2 (d18:1(4E)) + UDP-alpha-D-galactose = a ganglioside GD1b (d18:1(4E)) + UDP + H(+). The enzyme catalyses a ganglioside GA2 (d18:1(4E)) + UDP-alpha-D-galactose = a ganglioside GA1 (d18:1(4E)) + UDP + H(+). The protein operates within protein modification; protein glycosylation. In terms of biological role, involved in GM1/GD1B/GA1 ganglioside biosynthesis. The chain is Beta-1,3-galactosyltransferase 4 from Mus musculus (Mouse).